The sequence spans 374 residues: tRNA (guanine(26)-N(2))-dimethyltransferase (374 aa).

The Trm1 methyltransferase domain maps to 1 to 367; sequence MILKEGEVVF…ATLKNVIEAI (367 aa). S-adenosyl-L-methionine contacts are provided by R34, R66, D86, D113, and A114.

Belongs to the class I-like SAM-binding methyltransferase superfamily. Trm1 family.

The catalysed reaction is guanosine(26) in tRNA + 2 S-adenosyl-L-methionine = N(2)-dimethylguanosine(26) in tRNA + 2 S-adenosyl-L-homocysteine + 2 H(+). In terms of biological role, dimethylates a single guanine residue at position 26 of a number of tRNAs using S-adenosyl-L-methionine as donor of the methyl groups. The sequence is that of tRNA (guanine(26)-N(2))-dimethyltransferase from Methanocaldococcus jannaschii (strain ATCC 43067 / DSM 2661 / JAL-1 / JCM 10045 / NBRC 100440) (Methanococcus jannaschii).